Here is a 270-residue protein sequence, read N- to C-terminus: tRNA pseudouridine synthase B (270 aa).

Catalysis depends on Asp-49, which acts as the Nucleophile.

Belongs to the pseudouridine synthase TruB family. Type 1 subfamily.

The enzyme catalyses uridine(55) in tRNA = pseudouridine(55) in tRNA. Functionally, responsible for synthesis of pseudouridine from uracil-55 in the psi GC loop of transfer RNAs. In Bartonella quintana (strain Toulouse) (Rochalimaea quintana), this protein is tRNA pseudouridine synthase B.